The following is a 699-amino-acid chain: D-(-)-3-hydroxybutyrate oligomer hydrolase (699 aa).

A signal peptide spans Met-1–Ala-33. Residue Ser-311 is the Charge relay system of the active site.

This sequence belongs to the D-(-)-3-hydroxybutyrate oligomer hydrolase family.

Its subcellular location is the secreted. The enzyme catalyses (3R)-hydroxybutanoate dimer + H2O = 2 (R)-3-hydroxybutanoate + H(+). The protein operates within lipid metabolism; butanoate metabolism. In terms of biological role, participates in the degradation of poly-3-hydroxybutyrate (PHB). It works downstream of poly(3-hydroxybutyrate) depolymerase, hydrolyzing D(-)-3-hydroxybutyrate oligomers of various length (3HB-oligomers) into 3HB-monomers. The chain is D-(-)-3-hydroxybutyrate oligomer hydrolase from Burkholderia mallei (strain NCTC 10247).